Reading from the N-terminus, the 517-residue chain is MAAAALNGLKMAATSQAYLESMPVNDTRKLLSDLCRHFYGLGWVSGTGGSITIKVHDESIPKPQQLIVMSPSGVQKERMVPEDMYVLSPSGCFLSSPSPKPYPNKPPKCSDCAPLFMKAYLMRNAGAVIHSHGMESCIVTMIDPLSKEFRITHMEMIKGIQGHGYYDELVVPIIENTAHERELTDALAEAIEAYPKTTAVLVRNHGIYIWGDSWIHAKTQAECYHYLFDAAIKLYQLGLDWSTPDHGPIKKYGGKTNMSVKAGTVNSNHETEPSRRCIVLDIEGTTTPISFVTDVLFPFARNNVSRHLAATYETDETQDDIKLLRTQVQSDLEQGIVGAVPIPPDDAGKEEVIAALVANVEAMIKADRKITALKQLQGHIWRTGFQNNELEGVVFEDVPEALQKWHASGIKVYIYSSGSRLAQRLLFGYTNYGDLRKYLCGFFDTTVGNKRETKSYVEITESVGVDKPSEILFVTDVYQEAVAAKAAGLEVIISIRPGNGPLPDNHGFKTITSFSDI.

The methylthioribulose-1-phosphate dehydratase stretch occupies residues 1–240; sequence MAAAALNGLK…AIKLYQLGLD (240 aa). Position 112 (cysteine 112) interacts with substrate. 2 residues coordinate Zn(2+): histidine 130 and histidine 132. Glutamate 155 (proton donor/acceptor; for methylthioribulose-1-phosphate dehydratase activity) is an active-site residue. Histidine 205 provides a ligand contact to Zn(2+). An enolase-phosphatase E1 region spans residues 278–517; sequence IVLDIEGTTT…FKTITSFSDI (240 aa). Mg(2+)-binding residues include aspartate 281 and glutamate 283. Substrate contacts are provided by residues 416 to 417 and lysine 450; that span reads SS. Aspartate 476 lines the Mg(2+) pocket.

It in the N-terminal section; belongs to the aldolase class II family. MtnB subfamily. This sequence in the C-terminal section; belongs to the HAD-like hydrolase superfamily. MasA/MtnC family. The cofactor is Zn(2+). Mg(2+) serves as cofactor.

The catalysed reaction is 5-(methylsulfanyl)-D-ribulose 1-phosphate = 5-methylsulfanyl-2,3-dioxopentyl phosphate + H2O. It catalyses the reaction 5-methylsulfanyl-2,3-dioxopentyl phosphate + H2O = 1,2-dihydroxy-5-(methylsulfanyl)pent-1-en-3-one + phosphate. Its pathway is amino-acid biosynthesis; L-methionine biosynthesis via salvage pathway; L-methionine from S-methyl-5-thio-alpha-D-ribose 1-phosphate: step 2/6. It functions in the pathway amino-acid biosynthesis; L-methionine biosynthesis via salvage pathway; L-methionine from S-methyl-5-thio-alpha-D-ribose 1-phosphate: step 3/6. It participates in amino-acid biosynthesis; L-methionine biosynthesis via salvage pathway; L-methionine from S-methyl-5-thio-alpha-D-ribose 1-phosphate: step 4/6. The chain is Probable bifunctional methylthioribulose-1-phosphate dehydratase/enolase-phosphatase E1 1 from Vitis vinifera (Grape).